Consider the following 312-residue polypeptide: Ribonuclease Z (312 aa).

Positions 63, 65, 67, 68, 140, 211, and 269 each coordinate Zn(2+). Aspartate 67 functions as the Proton acceptor in the catalytic mechanism.

This sequence belongs to the RNase Z family. Homodimer. Zn(2+) serves as cofactor.

The enzyme catalyses Endonucleolytic cleavage of RNA, removing extra 3' nucleotides from tRNA precursor, generating 3' termini of tRNAs. A 3'-hydroxy group is left at the tRNA terminus and a 5'-phosphoryl group is left at the trailer molecule.. In terms of biological role, zinc phosphodiesterase, which displays some tRNA 3'-processing endonuclease activity. Probably involved in tRNA maturation, by removing a 3'-trailer from precursor tRNA. In Anoxybacillus flavithermus (strain DSM 21510 / WK1), this protein is Ribonuclease Z.